Reading from the N-terminus, the 542-residue chain is Peptide chain release factor 3 (542 aa).

Positions 14 to 283 (ERRRNFAIIS…AFLDYALKPA (270 aa)) constitute a tr-type G domain. GTP contacts are provided by residues 23–30 (SHPDAGKT), 91–95 (DTPGH), and 145–148 (NKLD).

The protein belongs to the TRAFAC class translation factor GTPase superfamily. Classic translation factor GTPase family. PrfC subfamily.

It is found in the cytoplasm. Increases the formation of ribosomal termination complexes and stimulates activities of RF-1 and RF-2. It binds guanine nucleotides and has strong preference for UGA stop codons. It may interact directly with the ribosome. The stimulation of RF-1 and RF-2 is significantly reduced by GTP and GDP, but not by GMP. The sequence is that of Peptide chain release factor 3 from Cyanothece sp. (strain PCC 7425 / ATCC 29141).